A 473-amino-acid chain; its full sequence is Lysophospholipid acyltransferase 5 (473 aa).

The next 4 membrane-spanning stretches (helical) occupy residues 20 to 40 (LLISVLAGYPLAVVHRTFFYN), 43 to 63 (AQHQHLFFVIVGLSLWMFNCG), 66 to 86 (VIHPILSIFGAFFITNFMAGT), and 88 to 108 (ASIYAAHIVFLGHLLIGYWFH). Catalysis depends on residues asparagine 315 and histidine 351. The next 3 helical transmembrane spans lie at 341-361 (VITLSYLAIWHGYHLGYFLLF), 396-416 (FIWIFGKLTISYSMGFAFLMF), and 431-451 (LYFIGFIIYFIVWPILHMVLL). Positions 470–473 (KKEL) match the Di-lysine motif motif.

This sequence belongs to the membrane-bound acyltransferase family.

It localises to the endoplasmic reticulum membrane. It carries out the reaction a 1-acyl-sn-glycero-3-phosphocholine + an acyl-CoA = a 1,2-diacyl-sn-glycero-3-phosphocholine + CoA. It catalyses the reaction a 1-acyl-sn-glycero-3-phospho-L-serine + an acyl-CoA = a 1,2-diacyl-sn-glycero-3-phospho-L-serine + CoA. The enzyme catalyses a 1-acyl-sn-glycero-3-phosphoethanolamine + an acyl-CoA = a 1,2-diacyl-sn-glycero-3-phosphoethanolamine + CoA. Its pathway is lipid metabolism; phospholipid metabolism. Probable acyltransferase which may mediate the conversion of lysophosphatidylcholine (1-acyl-sn-glycero-3-phosphocholine or LPC) into phosphatidylcholine (1,2-diacyl-sn-glycero-3-phosphocholine or PC) (LPCAT activity). May also catalyze the conversion of lysophosphatidylethanolamine (1-acyl-2-hydroxy-sn-glycero-3-phosphoethanolamine or LPE) into phosphatidylethanolamine (1,2-diacyl-sn-glycero-3-phosphoethanolamine or PE) (LPEAT activity), as well as the conversion of lysophosphatidylserine (1-acyl-2-hydroxy-sn-glycero-3-phospho-L-serine or LPS) into phosphatidylserine (1,2-diacyl-sn-glycero-3-phospho-L-serine or PS) (LPSAT activity). Required for incorporation of arachidonic acid into PC, PE, and PS. The polypeptide is Lysophospholipid acyltransferase 5 (mboa-6) (Caenorhabditis elegans).